A 3414-amino-acid polypeptide reads, in one-letter code: MLSVRLLIVVLALANAENLVRKSVEHLTQEETLDLQAALRELQMDSSSIGFQKIAAAHGAPASCVHKDTSIACCIHGMPTFPHWHRAYVVHMERALQTKRRTSGLPYWDWTEPITQLPSLAADPVYIDSQGGKAHTNYWYRGNIDFLDKKTNRAVDDRLFEKVKPGQHTHLMESVLDALEQDEFCKFEIQFELAHNAIHYLVGGKHDYSMANLEYTAYDPIFFLHHSNVDRIFAIWQRLQELRNKDPKAMDCAQELLHQKMEPFSWEDNDIPLTNEHSTPADLFDYCELHYDYDTLNLNGMTPEELKTYLDERSSRARAFASFRLKGFGGSANVFVYVCIPDDNDRNDDHCEKAGDFFVLGGPSEMKWQFYRPYLFDLSDTVHKMGMKLDGHYTVKAELFSVNGTALPDDLLPHPVVVHHPEKGFTDPPVKHHQSANLLVRKNINDLTREEVLNLREAFHKFQEDRSVDGYQATAEYHGLPARCPRPDAKDRYACCVHGMPIFPHWHRLFVTQVEDALVGRGATIGIPYWDWTEPMTHIPGLAGNKTYVDSHGASHTNPFHSSVIAFEENAPHTKRQIDQRLFKPATFGHHTDLFNQILYAFEQEDYCDFEVQFEITHNTIHAWTGGSEHFSMSSLHYTAFDPLFYFHHSNVDRLWAVWQALQMRRHKPYRAHCAISLEHMHLKPFAFSSPLNNNEKTHANAMPNKIYDYENVLHYTYEDLTFGGISLENIEKMIHENQQEDRIYAGFLLAGIRTSANVDIFIKTTDSVQHKAGTFAVLGGSKEMKWGFDRVFKFDITHVLKDLDLTADGDFEVTVDITEVDGTKLASSLIPHASVIREHARVKFDKVPRSRLIRKNVDRLSPEEMNELRKALALLKEDKSAGGFQQLGAFHGEPKWCPSPEASKKFACCVHGMSVFPHWHRLLTVQSENALRRHGYDGALPYWDWTSPLNHLPELADHEKYVDPEDGVEKHNPWFDGHIDTVDKTTTRSVQNKLFEQPEFGHYTSIAKQVLLALEQDNFCDFEIQYEIAHNYIHALVGGAQPYGMASLRYTAFDPLFYLHHSNTDRIWAIWQALQKYRGKPYNVANCAVTSMREPLQPFGLSANINTDHVTKEHSVPFNVFDYKTNFNYEYDTLEFNGLSISQLNKKLEAIKSQDRFFAGFLLSGFKKSSLVKFNICTDSSNCHPAGEFYLLGDENEMPWAYDRVFKYDITEKLHDLKLHAEDHFYIDYEVFDLKPASLGKDLFKQPSVIHEPRIGHHEGEVYQAEVTSANRIRKNIENLSLGELESLRAAFLEIENDGTYESIAKFHGSPGLCQLNGNPISCCVHGMPTFPHWHRLYVVVVENALLKKGSSVAVPYWDWTKRIEHLPHLISDATYYNSRQHHYETNPFHHGKITHENEITTRDPKDSLFHSDYFYEQVLYALEQDNFCDFEIQLEILHNALHSLLGGKGKYSMSNLDYAAFDPVFFLHHATTDRIWAIWQDLQRFRKRPYREANCAIQLMHTPLQPFDKSDNNDEATKTHATPHDGFEYQNSFGYAYDNLELNHYSIPQLDHMLQERKRHDRVFAGFLLHNIGTSADGHVFVCLPTGEHTKDCSHEAGMFSILGGQTEMSFVFDRLYKLDITKALKKNGVHLQGDFDLEIEITAVNGSHLDSHVIHSPTILFEAGTDSAHTDDGHTEPVMIRKDITQLDKRQQLSLVKALESMKADHSSDGFQAIASFHALPPLCPSPAASKRFACCVHGMATFPQWHRLYTVQFQDSLRKHGAVVGLPYWDWTLPRSELPELLTVSTIHDPETGRDIPNPFIGSKIEFEGENVHTKRDINRDRLFQGSTKTHHNWFIEQALLALEQTNYCDFEVQFEIMHNGVHTWVGGKEPYGIGHLHYASYDPLFYIHHSQTDRIWAIWQSLQRFRGLSGSEANCAVNLMKTPLKPFSFGAPYNLNDHTHDFSKPEDTFDYQKFGYIYDTLEFAGWSIRGIDHIVRNRQEHSRVFAGFLLEGFGTSATVDFQVCRTAGDCEDAGYFTVLGGEKEMPWAFDRLYKYDITETLDKMNLRHDEIFQIEVTITSYDGTVLDSGLIPTPSIIYDPAHHDISSHHLSLNKVRHDLSTLSERDIGSLKYALSSLQADTSADGFAAIASFHGLPAKCNDSHNNEVACCIHGMPTFPHWHRLYTLQFEQALRRHGSSVAVPYWDWTKPIHNIPHLFTDKEYYDVWRNKVMPNPFARGYVPSHDTYTVRDVQEGLFHLTSTGEHSALLNQALLALEQHDYCDFAVQFEVMHNTIHYLVGGPQVYSLSSLHYASYDPIFFIHHSFVDKVWAVWQALQEKRGLPSDRADCAVSLMTQNMRPFHYEINHNQFTKKHAVPNDVFKYELLGYRYDNLEIGGMNLHEIEKEIKDKQHHVRVFAGFLLHGIRTSADVQFQICKTSEDCHHGGQIFVLGGTKEMAWAYNRLFKYDITHALHDAHITPEDVFHPSEPFFIKVSVTAVNGTVLPASILHAPTIIYEPGLDHHEDHHSSSMAGHGVRKEINTLTTAEVDNLKDAMRAVMADHGPNGYQAIAAFHGNPPMCPMPDGKNYSCCTHGMATFPHWHRLYTKQMEDALTAHGARVGLPYWDGTTAFTALPTFVTDEEDNPFHHGHIDYLGVDTTRSPRDKLFNDPERGSESFFYRQVLLALEQTDFCQFEVQFEITHNAIHSWTGGLTPYGMSTLEYTTYDPLFWLHHANTDRIWAIWQALQEYRGLPYDHANCEIQAMKRPLRPFSDPINHNAFTHSNAKPTDVFEYSRFNFQYDNLRFHGMTIKKLEHELEKQKEEDRTFAAFLLHGIKKSADVSFDVCNHDGECHFAGTFAILGGEHEMPWSFDRLFRYDITQVLKQMHLEYDSDFTFHMRIIDTSGKQLPSDLIKMPTVEHSPGGKHHEKHHEDHHEDILVRKNIHSLSHHEAEELRDALYKLQNDESHGGYEHIAGFHGYPNLCPEKGDEKYPCCVHGMSIFPHWHRLHTIQFERALKKHGSHLGIPYWDWTQTISSLPTFFADSGNNNPFFKYHIRSINQDTVRDVNEAIFQQTKFGEFSSIFYLALQALEEDNYCDFEVQYEILHNEVHALIGGAEKYSMSTLEYSAFDPYFMIHHASLDKIWIIWQELQKRRVKPAHAGSCAGDIMHVPLHPFNYESVNNDDFTRENSLPNAVVDSHRFNYKYDNLNLHGHNIEELEEVLRSLRLKSRVFAGFVLSGIRTTAVVKVYIKSGTDSDDEYAGSFVILGGAKEMPWAYERLYRFDITETVHNLNLTDDHVKFRFDLKKYDHTELDASVLPAPIIVRRPNNAVFDIIEIPIGKDVNLPPKVVVKRGTKIMFMSVDEAVTTPMLNLGSYTAMFKCKVPPFSFHAFELGKMYSVESGDYFMTASTTELCNDNNLRIHVHVDDE.

Residues 1–16 (MLSVRLLIVVLALANA) form the signal peptide. Residue glutamate 17 participates in a divalent metal cation binding. Positions 17 to 437 (ENLVRKSVEH…PPVKHHQSAN (421 aa)) are functional unit a (wall). Histidine 58 contacts Cu cation. A disulfide bond links cysteine 64 and cysteine 73. A cross-link (2'-(S-cysteinyl)-histidine (Cys-His)) is located at residues 74-76 (CIH). Cu cation contacts are provided by histidine 76, histidine 85, histidine 195, histidine 199, and histidine 226. Cysteine 185 and cysteine 252 form a disulfide bridge. Positions 287–290 (CELH) form a cross-link, 2'-(S-cysteinyl)-histidine (Cys-His). Cysteines 339 and 351 form a disulfide. An N-linked (GlcNAc...) asparagine glycan is attached at asparagine 403. The segment at 438-851 (LLVRKNINDL…RVKFDKVPRS (414 aa)) is functional unit b (wall). Histidine 478 is a Cu cation binding site. A disulfide bond links cysteine 484 and cysteine 495. Positions 496–498 (CVH) form a cross-link, 2'-(S-cysteinyl)-histidine (Cys-His). Cu cation contacts are provided by histidine 498 and histidine 507. The N-linked (GlcNAc...) asparagine glycan is linked to asparagine 545. Cysteine 608 and cysteine 674 form a disulfide bridge. Residues histidine 618, histidine 622, and histidine 649 each contribute to the Cu cation site. The stretch at 628–669 (SEHFSMSSLHYTAFDPLFYFHHSNVDRLWAVWQALQMRRHKP) is one WD 1 repeat. Glutamate 737 lines the a divalent metal cation pocket. A functional unit c (wall) region spans residues 852–1271 (RLIRKNVDRL…EVYQAEVTSA (420 aa)). Histidine 892 serves as a coordination point for Cu cation. A disulfide bond links cysteine 898 and cysteine 909. Residues 910–912 (CVH) constitute a cross-link (2'-(S-cysteinyl)-histidine (Cys-His)). Cu cation contacts are provided by histidine 912, histidine 921, histidine 1031, histidine 1035, and histidine 1062. Intrachain disulfides connect cysteine 1021/cysteine 1088 and cysteine 1178/cysteine 1184. Residues 1041–1082 (AQPYGMASLRYTAFDPLFYLHHSNTDRIWAIWQALQKYRGKP) form a WD 2 repeat. Residues 1272–1680 (NRIRKNIENL…AHTDDGHTEP (409 aa)) are functional unit d (wall). Residue histidine 1309 coordinates Cu cation. The cysteines at positions 1315 and 1324 are disulfide-linked. Residues 1325–1327 (CVH) constitute a cross-link (2'-(S-cysteinyl)-histidine (Cys-His)). The Cu cation site is built by histidine 1327, histidine 1336, histidine 1440, histidine 1444, and histidine 1471. Cystine bridges form between cysteine 1430-cysteine 1497 and cysteine 1585-cysteine 1595. Residues 1450–1491 (KGKYSMSNLDYAAFDPVFFLHHATTDRIWAIWQDLQRFRKRP) form a WD 3 repeat. A glycan (N-linked (GlcNAc...) asparagine) is linked at asparagine 1648. A functional unit e (wall) region spans residues 1681–2097 (VMIRKDITQL…HDISSHHLSL (417 aa)). Residue histidine 1721 participates in Cu cation binding. A disulfide bridge connects residues cysteine 1727 and cysteine 1738. The segment at residues 1739–1741 (CVH) is a cross-link (2'-(S-cysteinyl)-histidine (Cys-His)). Cu cation-binding residues include histidine 1741, histidine 1750, histidine 1863, histidine 1867, and histidine 1894. Cystine bridges form between cysteine 1853–cysteine 1920 and cysteine 2009–cysteine 2015. The stretch at 1873–1914 (KEPYGIGHLHYASYDPLFYIHHSQTDRIWAIWQSLQRFRGLS) is one WD 4 repeat. The tract at residues 2098–2517 (NKVRHDLSTL…EDHHSSSMAG (420 aa)) is functional unit f (wall). Cu cation is bound at residue histidine 2138. A disulfide bridge connects residues cysteine 2144 and cysteine 2154. N-linked (GlcNAc...) asparagine glycosylation occurs at asparagine 2145. The 2'-(S-cysteinyl)-histidine (Cys-His) cross-link spans 2155 to 2157 (CIH). Residues histidine 2157, histidine 2166, histidine 2276, histidine 2280, and histidine 2307 each contribute to the Cu cation site. The stretch at 2163 to 2199 (PHWHRLYTLQFEQALRRHGSSVAVPYWDWTKPIHNIP) is one WD 5 repeat. Disulfide bonds link cysteine 2266-cysteine 2333 and cysteine 2420-cysteine 2426. Glutamate 2424 provides a ligand contact to a divalent metal cation. Residues 2518–2921 (HGVRKEINTL…EKHHEDHHED (404 aa)) are functional unit g (internal arc). Histidine 2558 lines the Cu cation pocket. A disulfide bond links cysteine 2564 and cysteine 2574. A glycan (N-linked (GlcNAc...) asparagine) is linked at asparagine 2571. The segment at residues 2575-2577 (CTH) is a cross-link (2'-(S-cysteinyl)-histidine (Cys-His)). Positions 2577, 2586, 2686, 2690, and 2717 each coordinate Cu cation. Disulfide bonds link cysteine 2676/cysteine 2743 and cysteine 2830/cysteine 2836. The stretch at 2696–2737 (LTPYGMSTLEYTTYDPLFWLHHANTDRIWAIWQALQEYRGLP) is one WD 6 repeat. A functional unit h (internal slab) region spans residues 2922-3414 (ILVRKNIHSL…LRIHVHVDDE (493 aa)). Residue histidine 2962 participates in Cu cation binding. An intrachain disulfide couples cysteine 2968 to cysteine 2978. The 2'-(S-cysteinyl)-histidine (Cys-His) cross-link spans 2979–2981 (CVH). Residues histidine 2981, histidine 2990, histidine 3091, histidine 3095, and histidine 3122 each contribute to the Cu cation site. Cysteine 3081 and cysteine 3148 are disulfide-bonded. The WD 7 repeat unit spans residues 3101 to 3142 (AEKYSMSTLEYSAFDPYFMIHHASLDKIWIIWQELQKRRVKP). A glycan (N-linked (GlcNAc...) asparagine) is linked at asparagine 3278. Cysteine 3367 and cysteine 3400 are disulfide-bonded.

The protein belongs to the tyrosinase family. Hemocyanin subfamily. As to quaternary structure, homo-didecamer, with two decamers assembled face-to-face at their open ends. This didecamer form a stable 25 nM cylinder wall. Post-translationally, probably N-glycosylated. Asn-1280 and Asn-2484 are buried deeply in the protein which make them inaccessible for sugar attachment. Asn-3278 N-glycan is likely to represent a diantennate carbohydrate tree. The didecamer is almost evenly tagged by a total of 120 sugar trees. As to expression, hemolymph.

The protein localises to the secreted. The protein resides in the extracellular space. Hemocyanins are copper-containing oxygen carriers occurring freely dissolved in the hemolymph of many mollusks and arthropods. This Megathura crenulata (Giant keyhole limpet) protein is Hemocyanin 1.